The primary structure comprises 235 residues: MWGYLSLLPMCLAFWAIAGIWTVFSLAVVNKAVNLTDGFPYISVCGNVPPQSCIFSQVLNIGAASAAWICILRYYQLRDWGVRKWHNQVILWTGLLCALGTSIVGNFQEKNQRATHLTGAFLAFFVGIVYFWLQLFLSWRMKNLPQPGAPWIGPLRLVLCSACFILEVAMVVLHSWSMRSVSAICEWVAAMLLFILFGLLAVDFSRLDSCTLCLQPGSGSLRPPPDSPTSLHVQL.

Residues 1-8 lie on the Cytoplasmic side of the membrane; it reads MWGYLSLL. Residues 9–29 form a helical membrane-spanning segment; the sequence is PMCLAFWAIAGIWTVFSLAVV. Residues 30-51 lie on the Extracellular side of the membrane; sequence NKAVNLTDGFPYISVCGNVPPQ. Residue asparagine 34 is glycosylated (N-linked (GlcNAc...) asparagine). A helical transmembrane segment spans residues 52–72; that stretch reads SCIFSQVLNIGAASAAWICIL. Over 73-88 the chain is Cytoplasmic; the sequence is RYYQLRDWGVRKWHNQ. The helical transmembrane segment at 89 to 109 threads the bilayer; the sequence is VILWTGLLCALGTSIVGNFQE. Topologically, residues 110–116 are extracellular; sequence KNQRATH. A helical transmembrane segment spans residues 117–137; the sequence is LTGAFLAFFVGIVYFWLQLFL. Over 138 to 156 the chain is Cytoplasmic; that stretch reads SWRMKNLPQPGAPWIGPLR. A helical transmembrane segment spans residues 157-177; that stretch reads LVLCSACFILEVAMVVLHSWS. Residues 178 to 180 are Extracellular-facing; it reads MRS. Residues 181-201 traverse the membrane as a helical segment; that stretch reads VSAICEWVAAMLLFILFGLLA. At 202 to 235 the chain is on the cytoplasmic side; sequence VDFSRLDSCTLCLQPGSGSLRPPPDSPTSLHVQL.

This sequence belongs to the DRAM/TMEM150 family.

The protein localises to the cell membrane. Its subcellular location is the endosome membrane. It is found in the cytoplasmic vesicle. It localises to the autophagosome membrane. Functionally, modulator of macroautophagy that causes accumulation of autophagosomes under basal conditions and enhances autophagic flux. Represses cell death and promotes long-term clonogenic survival of cells grown in the absence of glucose in a macroautophagy-independent manner. May have some role in extracellular matrix engulfment or growth factor receptor recycling, both of which can modulate cell survival. This is Modulator of macroautophagy TMEM150B from Bos taurus (Bovine).